The following is an 81-amino-acid chain: Photosystem I iron-sulfur center (81 aa).

4Fe-4S ferredoxin-type domains lie at 2–31 and 37–68; these read SHAV…MVPW and GQIA…IRVY. [4Fe-4S] cluster is bound by residues cysteine 11, cysteine 14, cysteine 17, cysteine 21, cysteine 48, cysteine 51, cysteine 54, and cysteine 58.

As to quaternary structure, the cyanobacterial PSI reaction center is composed of one copy each of PsaA,B,C,D,E,F,I,J,K,L,M and X, and forms trimeric complexes. The cofactor is [4Fe-4S] cluster.

It is found in the cellular thylakoid membrane. The enzyme catalyses reduced [plastocyanin] + hnu + oxidized [2Fe-2S]-[ferredoxin] = oxidized [plastocyanin] + reduced [2Fe-2S]-[ferredoxin]. Apoprotein for the two 4Fe-4S centers FA and FB of photosystem I (PSI); essential for photochemical activity. FB is the terminal electron acceptor of PSI, donating electrons to ferredoxin. The C-terminus interacts with PsaA/B/D and helps assemble the protein into the PSI complex. Required for binding of PsaD and PsaE to PSI. PSI is a plastocyanin/cytochrome c6-ferredoxin oxidoreductase, converting photonic excitation into a charge separation, which transfers an electron from the donor P700 chlorophyll pair to the spectroscopically characterized acceptors A0, A1, FX, FA and FB in turn. The chain is Photosystem I iron-sulfur center from Synechococcus sp. (strain WH7803).